We begin with the raw amino-acid sequence, 648 residues long: 1-deoxy-D-xylulose-5-phosphate synthase (648 aa).

Residues H72 and 113–115 (GHA) contribute to the thiamine diphosphate site. A Mg(2+)-binding site is contributed by D144. Residues 145 to 146 (GA), N173, and E363 each bind thiamine diphosphate. N173 provides a ligand contact to Mg(2+).

This sequence belongs to the transketolase family. DXPS subfamily. As to quaternary structure, homodimer. It depends on Mg(2+) as a cofactor. Thiamine diphosphate is required as a cofactor.

The catalysed reaction is D-glyceraldehyde 3-phosphate + pyruvate + H(+) = 1-deoxy-D-xylulose 5-phosphate + CO2. Its pathway is metabolic intermediate biosynthesis; 1-deoxy-D-xylulose 5-phosphate biosynthesis; 1-deoxy-D-xylulose 5-phosphate from D-glyceraldehyde 3-phosphate and pyruvate: step 1/1. Its function is as follows. Catalyzes the acyloin condensation reaction between C atoms 2 and 3 of pyruvate and glyceraldehyde 3-phosphate to yield 1-deoxy-D-xylulose-5-phosphate (DXP). The sequence is that of 1-deoxy-D-xylulose-5-phosphate synthase from Symbiobacterium thermophilum (strain DSM 24528 / JCM 14929 / IAM 14863 / T).